Here is a 203-residue protein sequence, read N- to C-terminus: Thymidylate kinase (203 aa).

Residue 10–17 coordinates ATP; it reads GTEGSGKS.

Belongs to the thymidylate kinase family.

It catalyses the reaction dTMP + ATP = dTDP + ADP. Phosphorylation of dTMP to form dTDP in both de novo and salvage pathways of dTTP synthesis. This chain is Thymidylate kinase, found in Dichelobacter nodosus (strain VCS1703A).